The primary structure comprises 228 residues: Ribose-5-phosphate isomerase A (228 aa).

Substrate-binding positions include 32–35 (TGST), 85–88 (DGAD), and 98–101 (KGGG). The Proton acceptor role is filled by glutamate 107. A substrate-binding site is contributed by lysine 125.

The protein belongs to the ribose 5-phosphate isomerase family. Homodimer.

It carries out the reaction aldehydo-D-ribose 5-phosphate = D-ribulose 5-phosphate. It functions in the pathway carbohydrate degradation; pentose phosphate pathway; D-ribose 5-phosphate from D-ribulose 5-phosphate (non-oxidative stage): step 1/1. Its function is as follows. Catalyzes the reversible conversion of ribose-5-phosphate to ribulose 5-phosphate. The sequence is that of Ribose-5-phosphate isomerase A from Cupriavidus necator (strain ATCC 17699 / DSM 428 / KCTC 22496 / NCIMB 10442 / H16 / Stanier 337) (Ralstonia eutropha).